A 937-amino-acid polypeptide reads, in one-letter code: Inactive tyrosine-protein kinase transmembrane receptor ROR1 (937 aa).

The N-terminal stretch at 1–29 (MHRPRRRGTRPPLLALLAALLLAARGAAA) is a signal peptide. Over 30–406 (QETELSVSAE…KEKNKMEILY (377 aa)) the chain is Extracellular. An Ig-like C2-type domain is found at 42–147 (PTSSWNISSE…EVVSSTGVLF (106 aa)). Residues N47 and N66 are each glycosylated (N-linked (GlcNAc...) asparagine). Disulfide bonds link C79/C131, C170/C235, C178/C228, C219/C260, C248/C296, C252/C282, C313/C391, C334/C374, and C362/C386. The FZ domain maps to 165-299 (EEDGFCQPYR…SPEAANCIRI (135 aa)). A glycan (N-linked (GlcNAc...) asparagine) is linked at N184. The region spanning 312–391 (KCYNSTGVDY…KSDLCDIPAC (80 aa)) is the Kringle domain. An N-linked (GlcNAc...) asparagine glycan is attached at N315. A helical membrane pass occupies residues 407 to 427 (ILVPSVAIPLAIALLFFFICV). Topologically, residues 428-937 (CRNNQKSSSA…HTESMISAEL (510 aa)) are cytoplasmic. Residues 473–746 (VRFMEELGEC…PRFKDIHVRL (274 aa)) form the Protein kinase domain. ATP contacts are provided by residues 479–487 (LGECAFGKI) and K506. Phosphotyrosine; by autocatalysis is present on Y645. Positions 753 to 762 (SSHTSSTTPS) are enriched in low complexity. Disordered stretches follow at residues 753–779 (SSHT…SPVS) and 833–890 (AAHY…HMSI). The span at 763–779 (GGNATTQTTSLSASPVS) shows a compositional bias: polar residues. Low complexity predominate over residues 854 to 864 (RSPSSASGSTS). The span at 865–880 (TGHVTSLPSSGSNQEA) shows a compositional bias: polar residues.

It belongs to the protein kinase superfamily. Tyr protein kinase family. ROR subfamily. In terms of assembly, interacts with ERBB2 and IGFBP5. In terms of tissue distribution, expressed strongly in human heart, lung and kidney, but weakly in the CNS. Isoform Short is strongly expressed in fetal and adult CNS and in a variety of human cancers, including those originating from CNS or PNS neuroectoderm.

Its subcellular location is the membrane. The protein resides in the cell projection. The protein localises to the axon. In terms of biological role, has very low kinase activity in vitro and is unlikely to function as a tyrosine kinase in vivo. Receptor for ligand WNT5A which activate downstream NFkB signaling pathway and may result in the inhibition of WNT3A-mediated signaling. In inner ear, crucial for spiral ganglion neurons to innervate auditory hair cells. Via IGFBP5 ligand, forms a complex with ERBB2 to enhance CREB oncogenic signaling. This chain is Inactive tyrosine-protein kinase transmembrane receptor ROR1 (ROR1), found in Homo sapiens (Human).